The sequence spans 179 residues: Large ribosomal subunit protein uL6 (179 aa).

It belongs to the universal ribosomal protein uL6 family. Part of the 50S ribosomal subunit.

This protein binds to the 23S rRNA, and is important in its secondary structure. It is located near the subunit interface in the base of the L7/L12 stalk, and near the tRNA binding site of the peptidyltransferase center. The sequence is that of Large ribosomal subunit protein uL6 from Persephonella marina (strain DSM 14350 / EX-H1).